Reading from the N-terminus, the 881-residue chain is DNA mismatch repair protein MutS (881 aa).

627 to 634 (GPNMGGKS) contacts ATP.

This sequence belongs to the DNA mismatch repair MutS family.

Functionally, this protein is involved in the repair of mismatches in DNA. It is possible that it carries out the mismatch recognition step. This protein has a weak ATPase activity. This is DNA mismatch repair protein MutS from Acinetobacter baumannii (strain AB307-0294).